The chain runs to 221 residues: N-(5'-phosphoribosyl)anthranilate isomerase (221 aa).

This sequence belongs to the TrpF family.

The enzyme catalyses N-(5-phospho-beta-D-ribosyl)anthranilate = 1-(2-carboxyphenylamino)-1-deoxy-D-ribulose 5-phosphate. The protein operates within amino-acid biosynthesis; L-tryptophan biosynthesis; L-tryptophan from chorismate: step 3/5. This is N-(5'-phosphoribosyl)anthranilate isomerase from Parabacteroides distasonis (strain ATCC 8503 / DSM 20701 / CIP 104284 / JCM 5825 / NCTC 11152).